We begin with the raw amino-acid sequence, 600 residues long: Proton channel OTOP1 (600 aa).

Residues 1–50 are disordered; sequence MPGDRGALSSPAASSGSPSAAPSGIAACPPPPSPLARASPQASGPRRGAS. At 1–56 the chain is on the cytoplasmic side; the sequence is MPGDRGALSSPAASSGSPSAAPSGIAACPPPPSPLARASPQASGPRRGASVPQKLA. Over residues 7-27 the composition is skewed to low complexity; the sequence is ALSSPAASSGSPSAAPSGIAA. The helical transmembrane segment at 57–78 threads the bilayer; that stretch reads ETLSSQYGLNVFVAGLLFLLAW. The Extracellular segment spans residues 79–86; sequence AVHATGVG. The chain crosses the membrane as a helical span at residues 87 to 110; sequence KSDLLCVLTALMLLQLLWMLWYVG. Residues 111 to 128 lie on the Cytoplasmic side of the membrane; sequence RSYMQRRLIRPKDTHAGA. Residues 129 to 151 traverse the membrane as a helical segment; it reads RWLRGSITLFAFITIVLGCLKVA. Topologically, residues 152 to 161 are extracellular; the sequence is YFIGFSECLS. A helical transmembrane segment spans residues 162-186; that stretch reads ATEGVFPVTHAVHTLLQVYFLWGHA. At 187–194 the chain is on the cytoplasmic side; that stretch reads KDIIMSFK. Residues 195–221 form a helical membrane-spanning segment; it reads TLERFGVIHSVFTNLLLWANSVLNESK. The Extracellular portion of the chain corresponds to 222–262; sequence HQLNEHKERLITLGFGNITIVLDDHTPQCNCTPPALCSALS. Residues 263–288 traverse the membrane as a helical segment; the sequence is HGIYYLYPFNIEYQILASTMLYVLWK. Over 289–309 the chain is Cytoplasmic; the sequence is NIGRRVDSSRHQKMQCRFDGV. A helical membrane pass occupies residues 310–332; sequence LVGSVLGLTVLAATIAVVVVYMI. Residues 333-342 lie on the Extracellular side of the membrane; that stretch reads HIGRSKSKSE. Residues 343-368 traverse the membrane as a helical segment; that stretch reads SALIMFYLYAITVLLLMGAAGLVGSW. The Cytoplasmic portion of the chain corresponds to 369-386; that stretch reads IYRVDEKSLDESKNPARK. Residues 387–411 form a helical membrane-spanning segment; sequence LDADLLVATASGSWLLSWGSILAIA. Over 412–421 the chain is Extracellular; the sequence is CAETRPPYTW. A helical membrane pass occupies residues 422–442; it reads YNLPYSVLVIVEKYVQNIFII. At 443–532 the chain is on the cytoplasmic side; the sequence is ESVHLEPEGV…QGGMKRRLLR (90 aa). A helical transmembrane segment spans residues 533 to 551; the sequence is NITAFLFLCNISLWIPPAF. The Extracellular segment spans residues 552-569; it reads GCRPEYDNGLEEIVFGFE. Residues 570–593 form a helical membrane-spanning segment; sequence PWIIVVNLAMPFSIFYRMHAAAAL. The Cytoplasmic segment spans residues 594-600; it reads FEVYCKI.

Belongs to the otopetrin family. In terms of assembly, homodimer. Interacts with STAT1, independently of STAT1 phosphorylation status.

It localises to the cell membrane. The protein localises to the cell projection. It is found in the microvillus. The enzyme catalyses H(+)(in) = H(+)(out). Activated by both acid and alkali, with proton influx in response to extracellular acid and proton efflux during alkali stimulation. Inhibited by Zn(2+); this inhibition is thought to be pH-sensitive. Currents evoked in response to mild acid (pH 6.0) stimulus may also be mildly potentiated by exposure to Zn(2+). Activated by NH(4)Cl. Proton-selective ion channel. Biphasically modulated by acid and alkali, mediating proton influx and efflux in response to extracellular acid and base stimulation, respectively. Sour taste receptor, which carries inward currents in response to extracellular acidification. Sensor for ammonium chloride (NH(4)Cl) in taste receptor cells. NH(4)Cl acts by increasing the intracellular pH, thereby generating a driving force for proton entry through OTOP1 channel. Might also participate in alkaline sensation. Plays a role in the regulation of Ca(2+) flux in response to purigenic (ATP, ADP and UDP) stimuli, leading to increase in cytosolic Ca(2+) due to influx of extracellular calcium. May play this role by inhibiting P2Y purinoceptor-mediated Ca(2+) release in a Ca(2+)-dependent manner and promote an influx of Ca(2+) in response to ATP. Through this mechanism and possibly others, plays a role in the formation and function of calcium carbonate-based structures in the vestibular system of the inner ear, called otoconia, that sense gravity and linear acceleration. In obesity, may attenuate adipose tissue inflammation, through the negative regulation of IFNG signaling, hence may play an adaptive role in the maintainance of metabolic homeostasis. Following alkali activation, may also be permeable Na(+), K(+), Cs(+) and Li(+). This Rattus norvegicus (Rat) protein is Proton channel OTOP1.